Here is an 823-residue protein sequence, read N- to C-terminus: Putative E3 ubiquitin-protein ligase RF4 (823 aa).

Disordered regions lie at residues 24-72, 224-291, and 432-464; these read TVSP…NGSV, SKLS…CSGS, and ESVT…SEEK. Residues 61–72 show a composition bias toward polar residues; the sequence is KPQNHLSGNGSV. A compositionally biased stretch (low complexity) spans 224 to 240; it reads SKLSDSESLGAESNPPK. Positions 267 to 282 are enriched in polar residues; sequence FPNTPNSKKTQSSGTT. Residues 453–464 show a composition bias toward basic and acidic residues; sequence SEKKSGSESEEK. Residues 536–738 adopt a coiled-coil conformation; that stretch reads ELKALRKERE…ELKLKSDYSR (203 aa). The RING-type zinc finger occupies 768 to 808; it reads CVMCLSEEMSVIFLPCAHQVLCFKCNQLHEKEGMMDCPSCR.

Belongs to the RING-type zinc finger family.

It carries out the reaction S-ubiquitinyl-[E2 ubiquitin-conjugating enzyme]-L-cysteine + [acceptor protein]-L-lysine = [E2 ubiquitin-conjugating enzyme]-L-cysteine + N(6)-ubiquitinyl-[acceptor protein]-L-lysine.. It participates in protein modification; protein ubiquitination. The chain is Putative E3 ubiquitin-protein ligase RF4 (RF4) from Arabidopsis thaliana (Mouse-ear cress).